Consider the following 404-residue polypeptide: Aspergillopepsin-1 (404 aa).

The first 20 residues, 1–20, serve as a signal peptide directing secretion; that stretch reads MVILSKVAAVAVGLSTVASA. A propeptide spans 21 to 77 (activation peptide); the sequence is LPTGPSHSPHARRGFTINQITRQTARVGPKTASFPAIYSRALAKYGGTVPAHLKSAV. Residues 95–401 form the Peptidase A1 domain; that stretch reads YLTPVNIGGT…DSQGPRLGFA (307 aa). Asp111 is an active-site residue. Asn140 carries N-linked (GlcNAc...) asparagine glycosylation. Residue Asp293 is part of the active site. Residues Cys329 and Cys364 are joined by a disulfide bond.

It belongs to the peptidase A1 family. As to quaternary structure, monomer.

Its subcellular location is the secreted. The enzyme catalyses Hydrolysis of proteins with broad specificity. Generally favors hydrophobic residues in P1 and P1', but also accepts Lys in P1, which leads to activation of trypsinogen. Does not clot milk.. Functionally, secreted aspartic endopeptidase that allows assimilation of proteinaceous substrates. The scissile peptide bond is attacked by a nucleophilic water molecule activated by two aspartic residues in the active site. Shows a broad primary substrate specificity. Favors hydrophobic residues at the P1 and P1' positions, but also accepts a lysine residue in the P1 position, leading to the activation of trypsinogen and chymotrypsinogen A. This chain is Aspergillopepsin-1 (pepA), found in Aspergillus flavus (strain ATCC 200026 / FGSC A1120 / IAM 13836 / NRRL 3357 / JCM 12722 / SRRC 167).